We begin with the raw amino-acid sequence, 290 residues long: Glucuronoxylan 4-O-methyltransferase 2 (290 aa).

A helical membrane pass occupies residues 8-28 (FISSKLIFICCSILVLFILFL).

It belongs to the methyltransferase superfamily. In terms of tissue distribution, expressed in roots, rosette leaves and stems.

It is found in the golgi apparatus membrane. It catalyses the reaction glucuronoxylan D-glucuronate + n S-adenosyl-L-methionine = glucuronoxylan 4-O-methyl-D-glucuronate + n S-adenosyl-L-homocysteine + n H(+). In terms of biological role, methyltransferase catalyzing 4-O-methylation of glucuronic acid side chains on xylan. The sequence is that of Glucuronoxylan 4-O-methyltransferase 2 (GXM2) from Arabidopsis thaliana (Mouse-ear cress).